We begin with the raw amino-acid sequence, 86 residues long: RNA-binding protein Hfq (86 aa).

The Sm domain maps to 9–68 (DPYLNTLRKEKVPVSIYLVNGIKLQGSIESFDQFVVLLKNTVSQMVYKHAISTVVPARPV). Positions 67 to 86 (PVRLPSPTDGEHGDSEPGNA) are disordered. The span at 75–86 (DGEHGDSEPGNA) shows a compositional bias: basic and acidic residues.

The protein belongs to the Hfq family. As to quaternary structure, homohexamer.

Functionally, RNA chaperone that binds small regulatory RNA (sRNAs) and mRNAs to facilitate mRNA translational regulation in response to envelope stress, environmental stress and changes in metabolite concentrations. Also binds with high specificity to tRNAs. The sequence is that of RNA-binding protein Hfq from Pseudomonas putida (strain GB-1).